The chain runs to 753 residues: 5-methyltetrahydropteroyltriglutamate--homocysteine methyltransferase (753 aa).

5-methyltetrahydropteroyltri-L-glutamate is bound by residues 17–20 (RELK) and lysine 117. L-homocysteine contacts are provided by residues 431–433 (IGS) and glutamate 484. L-methionine is bound by residues 431 to 433 (IGS) and glutamate 484. 5-methyltetrahydropteroyltri-L-glutamate-binding positions include 515–516 (RC) and tryptophan 561. Aspartate 599 contacts L-homocysteine. Aspartate 599 provides a ligand contact to L-methionine. Glutamate 605 contributes to the 5-methyltetrahydropteroyltri-L-glutamate binding site. Zn(2+) is bound by residues histidine 641, cysteine 643, and glutamate 665. Histidine 694 serves as the catalytic Proton donor. Position 726 (cysteine 726) interacts with Zn(2+).

The protein belongs to the vitamin-B12 independent methionine synthase family. Zn(2+) serves as cofactor.

It carries out the reaction 5-methyltetrahydropteroyltri-L-glutamate + L-homocysteine = tetrahydropteroyltri-L-glutamate + L-methionine. Its pathway is amino-acid biosynthesis; L-methionine biosynthesis via de novo pathway; L-methionine from L-homocysteine (MetE route): step 1/1. Functionally, catalyzes the transfer of a methyl group from 5-methyltetrahydrofolate to homocysteine resulting in methionine formation. The polypeptide is 5-methyltetrahydropteroyltriglutamate--homocysteine methyltransferase (Escherichia coli (strain ATCC 8739 / DSM 1576 / NBRC 3972 / NCIMB 8545 / WDCM 00012 / Crooks)).